Consider the following 142-residue polypeptide: U1 small nuclear ribonucleoprotein C (142 aa).

The Matrin-type zinc-finger motif lies at 4–36 (YYCDYCDTFLTHDSPSVRKTHNGGRKHKDNVRM).

Belongs to the U1 small nuclear ribonucleoprotein C family. In terms of assembly, U1 snRNP is composed of the 7 core Sm proteins B/B', D1, D2, D3, E, F and G that assemble in a heptameric protein ring on the Sm site of the small nuclear RNA to form the core snRNP, and at least 3 U1 snRNP-specific proteins U1-70K, U1-A and U1-C. U1-C interacts with U1 snRNA and the 5' splice-site region of the pre-mRNA.

The protein resides in the nucleus. Its function is as follows. Component of the spliceosomal U1 snRNP, which is essential for recognition of the pre-mRNA 5' splice-site and the subsequent assembly of the spliceosome. U1-C is directly involved in initial 5' splice-site recognition for both constitutive and regulated alternative splicing. The interaction with the 5' splice-site seems to precede base-pairing between the pre-mRNA and the U1 snRNA. Stimulates commitment or early (E) complex formation by stabilizing the base pairing of the 5' end of the U1 snRNA and the 5' splice-site region. The chain is U1 small nuclear ribonucleoprotein C from Caenorhabditis briggsae.